The chain runs to 421 residues: EGFR adapter protein (421 aa).

4 disordered regions span residues 18–94 (TFIS…PQLQ), 109–154 (DVQE…RLVD), 173–194 (EDSR…SGCG), and 372–396 (PVPL…AGGT). Residues 21 to 30 (SSSSASSSSS) are compositionally biased toward low complexity. Positions 62–89 (FFHHHHPPAHPHPPRQQPHPHSHSHPHP) are enriched in basic residues. The span at 109-120 (DVQELSGQEHPH) shows a compositional bias: basic and acidic residues. Low complexity predominate over residues 181–194 (STCGSSLTSGSGCG). One can recognise an SH2 domain in the interval 286–379 (WFQAGIPREI…LLPVPLTLPR (94 aa)).

In terms of assembly, may interact (via SH2 domain) with Egfr (when phosphorylated). In terms of tissue distribution, detected along the wing margin, with high levels of expression in two stripes of cells on either side of the dorsal/ventral boundary and lower levels of expression in a small region at the anteroposterior boundary (at protein level). High levels of expression along two parallel stripes of cells on either side of the wing pouch dorsal/ventral boundary, and slightly lower levels of expression in a region either side of the anteroposterior boundary. Also expressed in discrete regions of the wing imaginal disk outside of the pouch. Expressed in eye imaginal disk photoreceptors with highest levels of expression in R7 photoreceptor cells.

Its function is as follows. Involved in the negative regulation of the Egfr/Ras signaling pathway. During wing morphogenesis, may function redundantly with PVRAP to inhibit Egfr activity and prevent uncontrolled cell growth. The chain is EGFR adapter protein from Drosophila melanogaster (Fruit fly).